An 89-amino-acid chain; its full sequence is Large ribosomal subunit protein bL27 (89 aa).

The tract at residues 1–22 (MAHKKAGGSSRNGRDSESKRLG) is disordered.

This sequence belongs to the bacterial ribosomal protein bL27 family.

This is Large ribosomal subunit protein bL27 from Bartonella henselae (strain ATCC 49882 / DSM 28221 / CCUG 30454 / Houston 1) (Rochalimaea henselae).